The following is a 147-amino-acid chain: Deoxyuridine 5'-triphosphate nucleotidohydrolase (147 aa).

Substrate is bound by residues 63-65, N76, and 80-82; these read RSG and TID.

Belongs to the dUTPase family. Requires Mg(2+) as cofactor.

It catalyses the reaction dUTP + H2O = dUMP + diphosphate + H(+). It functions in the pathway pyrimidine metabolism; dUMP biosynthesis; dUMP from dCTP (dUTP route): step 2/2. This enzyme is involved in nucleotide metabolism: it produces dUMP, the immediate precursor of thymidine nucleotides and it decreases the intracellular concentration of dUTP so that uracil cannot be incorporated into DNA. The protein is Deoxyuridine 5'-triphosphate nucleotidohydrolase of Chlamydia abortus (strain DSM 27085 / S26/3) (Chlamydophila abortus).